We begin with the raw amino-acid sequence, 1269 residues long: Protein cramped-like (1269 aa).

Positions 1–12 are enriched in gly residues; sequence MTVKLGDGGSGE. Positions 1–165 are disordered; it reads MTVKLGDGGS…GKKVRRQWES (165 aa). Basic and acidic residues-rich tracts occupy residues 13 to 24 and 43 to 52; these read DGLKKLGKRAAD and SGTKRDEKTP. Pro residues predominate over residues 59-74; it reads PPAPPGAPQAPSPPQG. The span at 105–123 shows a compositional bias: gly residues; the sequence is GNAGGSGPRGKGAEGGGSS. Over residues 124–147 the composition is skewed to low complexity; the sequence is SGNVSGVAPAAPAGGSRSSSRNLG. The segment covering 151–165 has biased composition (basic and acidic residues); that stretch reads GEKEEGKKVRRQWES. The region spanning 161–224 is the SANT domain; that stretch reads RQWESWSTED…FYYRTWHKIT (64 aa). At S307 the chain carries Phosphoserine. Disordered stretches follow at residues 450 to 541, 581 to 666, 757 to 827, 976 to 1034, 1055 to 1092, and 1115 to 1157; these read IQSG…PGAL, DTRP…EVPA, VRPA…NDSD, EGLS…DSFQ, IPLS…SQGE, and VPLS…PSDS. Over residues 485–507 the composition is skewed to low complexity; sequence SSGESSPESAPGEGAALSLSSPD. Composition is skewed to basic and acidic residues over residues 508–518 and 526–535; these read APDRPPPRHQD and TPAEGRDSPT. Composition is skewed to polar residues over residues 757–767, 774–806, and 982–1002; these read VRPAQEEQSMT, TVSS…SSGL, and SPLS…TGTH. 2 stretches are compositionally biased toward low complexity: residues 1055 to 1070 and 1125 to 1140; these read IPLS…LSPP and SDSS…SPQP. At S1268 the chain carries Phosphoserine.

It belongs to the cramped family.

It localises to the nucleus. The protein is Protein cramped-like of Homo sapiens (Human).